Reading from the N-terminus, the 548-residue chain is MFS-type transporter TOXA (548 aa).

Positions 1–12 are enriched in polar residues; that stretch reads MDEQIVSASSNV. A disordered region spans residues 1–33; it reads MDEQIVSASSNVKDGVEKQPVKDREDVDANVVP. The segment covering 14 to 27 has biased composition (basic and acidic residues); it reads DGVEKQPVKDREDV. Helical transmembrane passes span 43-63, 85-105, 114-134, 146-166, 177-197, 204-224, 250-270, 280-300, 316-336, 357-377, 382-402, 411-431, 444-464, and 518-538; these read ISLI…FLGA, AVAW…PLFG, KWLF…CALA, VAGI…ALIV, MIGA…GAIA, WCFW…LFFF, IGAG…QWGG, VVAL…HQYW, GFLL…AALY, MLPI…TISF, APFI…LYTF, IIGY…QAFI, YASA…LCVC, and FLVA…LSWA.

This sequence belongs to the major facilitator superfamily. TCR/Tet family.

Its subcellular location is the membrane. Its function is as follows. MFS-type transporter; part of the diffuse TOX2 gene cluster that mediates the biosynthesis of the HC-toxin, cyclic tetrapeptide of structure cyclo(D-Pro-L-Ala-D-Ala-L-Aeo), where Aeo stands for 2-amino-9,10-epoxi-8-oxodecanoic acid. HC-toxin is a determinant of specificity and virulence in the interaction between the producing fungus and its host, maize. TOXA acts as a HC-toxin efflux pump which contributes to self-protection against HC-toxin and/or the secretion of HC-toxin into the extracellular milieu. This is MFS-type transporter TOXA from Cochliobolus carbonum (Maize leaf spot fungus).